The following is a 154-amino-acid chain: 3-hydroxyacyl-[acyl-carrier-protein] dehydratase FabZ (154 aa).

His60 is an active-site residue.

It belongs to the thioester dehydratase family. FabZ subfamily.

Its subcellular location is the cytoplasm. It catalyses the reaction a (3R)-hydroxyacyl-[ACP] = a (2E)-enoyl-[ACP] + H2O. Its function is as follows. Involved in unsaturated fatty acids biosynthesis. Catalyzes the dehydration of short chain beta-hydroxyacyl-ACPs and long chain saturated and unsaturated beta-hydroxyacyl-ACPs. In Haemophilus ducreyi (strain 35000HP / ATCC 700724), this protein is 3-hydroxyacyl-[acyl-carrier-protein] dehydratase FabZ.